Here is a 120-residue protein sequence, read N- to C-terminus: Large ribosomal subunit protein bL19 (120 aa).

It belongs to the bacterial ribosomal protein bL19 family.

In terms of biological role, this protein is located at the 30S-50S ribosomal subunit interface and may play a role in the structure and function of the aminoacyl-tRNA binding site. This Chlorobium limicola (strain DSM 245 / NBRC 103803 / 6330) protein is Large ribosomal subunit protein bL19.